We begin with the raw amino-acid sequence, 185 residues long: Protein GrpE (185 aa).

A compositionally biased stretch (basic and acidic residues) spans 1 to 20 (MSQEKKEELQSEAQVTKEET). Positions 1–28 (MSQEKKEELQSEAQVTKEETPQANEAAA) are disordered.

Belongs to the GrpE family. As to quaternary structure, homodimer.

The protein resides in the cytoplasm. Its function is as follows. Participates actively in the response to hyperosmotic and heat shock by preventing the aggregation of stress-denatured proteins, in association with DnaK and GrpE. It is the nucleotide exchange factor for DnaK and may function as a thermosensor. Unfolded proteins bind initially to DnaJ; upon interaction with the DnaJ-bound protein, DnaK hydrolyzes its bound ATP, resulting in the formation of a stable complex. GrpE releases ADP from DnaK; ATP binding to DnaK triggers the release of the substrate protein, thus completing the reaction cycle. Several rounds of ATP-dependent interactions between DnaJ, DnaK and GrpE are required for fully efficient folding. This is Protein GrpE from Sulfurimonas denitrificans (strain ATCC 33889 / DSM 1251) (Thiomicrospira denitrificans (strain ATCC 33889 / DSM 1251)).